The primary structure comprises 387 residues: uncharacterized protein (387 aa).

3 disordered regions span residues 1 to 126, 138 to 169, and 275 to 298; these read MDGR…GDDE, GNQGGLVPGLAPIPSENENGKNDIEKNNRNEE, and SSIFSDSQAVTTDDEGISSTAGNK. Positions 32-45 are enriched in basic and acidic residues; that stretch reads SSDHRTSNSAESKK. Composition is skewed to polar residues over residues 49-63 and 78-93; these read SGKSISDLGISNNDN and DLSSRSTETSDNSKGT. A compositionally biased stretch (basic and acidic residues) spans 155–169; sequence ENGKNDIEKNNRNEE. A compositionally biased stretch (polar residues) spans 275–296; the sequence is SSIFSDSQAVTTDDEGISSTAG.

It belongs to the ThrE exporter (TC 2.A.79) family.

This is an uncharacterized protein from Saccharomyces cerevisiae (strain ATCC 204508 / S288c) (Baker's yeast).